The chain runs to 204 residues: Putative 3-methyladenine DNA glycosylase (204 aa).

This sequence belongs to the DNA glycosylase MPG family.

This Bacillus cytotoxicus (strain DSM 22905 / CIP 110041 / 391-98 / NVH 391-98) protein is Putative 3-methyladenine DNA glycosylase.